Consider the following 291-residue polypeptide: Ribose-phosphate pyrophosphokinase (291 aa).

Residues 34-36 and 93-94 contribute to the ATP site; these read DGE and RQ. Mg(2+) contacts are provided by histidine 127 and aspartate 165. Residue lysine 188 is part of the active site. D-ribose 5-phosphate-binding positions include arginine 190, aspartate 216, and 220 to 224; that span reads STGGT.

This sequence belongs to the ribose-phosphate pyrophosphokinase family. Class III (archaeal) subfamily. It depends on Mg(2+) as a cofactor.

Its subcellular location is the cytoplasm. The enzyme catalyses D-ribose 5-phosphate + ATP = 5-phospho-alpha-D-ribose 1-diphosphate + AMP + H(+). The protein operates within metabolic intermediate biosynthesis; 5-phospho-alpha-D-ribose 1-diphosphate biosynthesis; 5-phospho-alpha-D-ribose 1-diphosphate from D-ribose 5-phosphate (route I): step 1/1. Its function is as follows. Involved in the biosynthesis of the central metabolite phospho-alpha-D-ribosyl-1-pyrophosphate (PRPP) via the transfer of pyrophosphoryl group from ATP to 1-hydroxyl of ribose-5-phosphate (Rib-5-P). The protein is Ribose-phosphate pyrophosphokinase of Sulfurisphaera tokodaii (strain DSM 16993 / JCM 10545 / NBRC 100140 / 7) (Sulfolobus tokodaii).